A 135-amino-acid polypeptide reads, in one-letter code: Glutaredoxin-C5 (135 aa).

One can recognise a Glutaredoxin domain in the interval 29–134; that stretch reads AERVERLASE…PLLKEAGALW (106 aa). A disulfide bond links Cys-49 and Cys-52. A Responsive for interaction with TGA factors motif is present at residues 132–135; the sequence is ALWL.

The protein belongs to the glutaredoxin family. CC-type subfamily.

The protein resides in the cytoplasm. It is found in the nucleus. Its function is as follows. Has a glutathione-disulfide oxidoreductase activity in the presence of NADPH and glutathione reductase. Reduces low molecular weight disulfides and proteins. The sequence is that of Glutaredoxin-C5 (GRXC5) from Oryza sativa subsp. japonica (Rice).